The sequence spans 864 residues: Mitochondrial 15S rRNA processing factor CCM1 (864 aa).

Residues 1–76 constitute a mitochondrion transit peptide; that stretch reads MYMARCGPKN…REFSNTLKER (76 aa). PPR repeat units follow at residues 319 to 353 and 356 to 390; these read NKQN…STKH and DICT…NIKP.

The protein belongs to the CCM1 family. As to quaternary structure, binds to mitochondrial small subunit 15S rRNA.

It is found in the mitochondrion. Regulates mitochondrial small subunit maturation by controlling 15S rRNA 5'-end processing. Localizes to the 5' precursor of the 15S rRNA in a position that is subsequently occupied by mS47 in the mature yeast mtSSU. Uses structure and sequence-specific RNA recognition, binding to a single-stranded region of the precursor and specifically recognizing bases -6 to -1. The exchange of Ccm1 for mS47 is coupled to the irreversible removal of precursor rRNA that is accompanied by conformational changes of the mitoribosomal proteins uS5m and mS26. These conformational changes signal completion of 5'-end rRNA processing through protection of the mature 5'-end of the 15S rRNA and stabilization of mS47. The removal of the 5' precursor together with the dissociation of Ccm1 may be catalyzed by the 5'-3' exoribonuclease Pet127. Involved in the specific removal of group I introns in mitochondrial encoded transcripts. In Saccharomyces cerevisiae (strain RM11-1a) (Baker's yeast), this protein is Mitochondrial 15S rRNA processing factor CCM1 (CCM1).